The chain runs to 223 residues: Cytidylate kinase (223 aa).

10–18 (GPASSGKST) lines the ATP pocket.

It belongs to the cytidylate kinase family. Type 1 subfamily.

Its subcellular location is the cytoplasm. It catalyses the reaction CMP + ATP = CDP + ADP. The enzyme catalyses dCMP + ATP = dCDP + ADP. The protein is Cytidylate kinase of Streptococcus pneumoniae (strain 70585).